The following is a 315-amino-acid chain: Olfactory receptor 3A1 (315 aa).

Residues 1 to 28 lie on the Extracellular side of the membrane; the sequence is MQPESGANGTVIAEFILLGLLEAPGLQP. The N-linked (GlcNAc...) asparagine glycan is linked to asparagine 8. A helical membrane pass occupies residues 29 to 52; that stretch reads VVFVLFLFAYLVTVGGNLSILAAV. At 53–60 the chain is on the cytoplasmic side; sequence LVEPELHT. Residues 61–82 traverse the membrane as a helical segment; it reads PMYFFLGNLSVLDVGCISVTVP. Over 83–103 the chain is Extracellular; the sequence is SMLSRLLSRKRAVPCGACLTQ. A disulfide bridge connects residues cysteine 100 and cysteine 192. Residues 104–123 form a helical membrane-spanning segment; that stretch reads LFFFHLFVGVDCFLLIAMAY. Topologically, residues 124–143 are cytoplasmic; it reads DRFLAICRPLTYSTRMSQTV. The helical transmembrane segment at 144 to 161 threads the bilayer; it reads QRMLVAASWACAFTNALT. Over 162-199 the chain is Extracellular; that stretch reads HTVAMSTLNFCGPNVINHFYCDLPQLCQLSCSSTQLSE. The chain crosses the membrane as a helical span at residues 200–223; that stretch reads LLLFAVGFIMAGTSMALIVISYIH. Residues 224–240 are Cytoplasmic-facing; that stretch reads VAAAVLRIRSVEGRKKA. A helical membrane pass occupies residues 241-264; it reads FSTCGSHLTVVAIFYGSGIFNYMR. Topologically, residues 265–275 are extracellular; it reads LGSTKLSDKDK. Residues 276 to 295 form a helical membrane-spanning segment; it reads AVGIFNTVINPMLNPIIYSF. Topologically, residues 296–315 are cytoplasmic; it reads RNPDVQSAIWRMLTGRRSLA.

Belongs to the G-protein coupled receptor 1 family.

It localises to the cell membrane. Odorant receptor. The sequence is that of Olfactory receptor 3A1 (OR3A1) from Gorilla gorilla gorilla (Western lowland gorilla).